The chain runs to 92 residues: Probable Fe(2+)-trafficking protein (92 aa).

Belongs to the Fe(2+)-trafficking protein family.

In terms of biological role, could be a mediator in iron transactions between iron acquisition and iron-requiring processes, such as synthesis and/or repair of Fe-S clusters in biosynthetic enzymes. This Shewanella piezotolerans (strain WP3 / JCM 13877) protein is Probable Fe(2+)-trafficking protein.